We begin with the raw amino-acid sequence, 420 residues long: Protein PEA2 (420 aa).

The segment covering 132–153 (LTKENNNSFPNSKRARSSTNMG) has biased composition (polar residues). The segment at 132–169 (LTKENNNSFPNSKRARSSTNMGGTDKFNKGAYHTDKAD) is disordered. Over residues 157-169 (KFNKGAYHTDKAD) the composition is skewed to basic and acidic residues. Serine 230 is modified (phosphoserine). The tract at residues 323–363 (NSSRHNFGMSSPASSPVTWDPSSPSSVGSPTSGSGSRSLSI) is disordered. Over residues 325 to 339 (SRHNFGMSSPASSPV) the composition is skewed to polar residues. The segment covering 343–362 (PSSPSSVGSPTSGSGSRSLS) has biased composition (low complexity).

Functionally, localized to sites of polarized growth and is required for efficient mating and bipolar budding. The protein is Protein PEA2 (PEA2) of Saccharomyces cerevisiae (strain ATCC 204508 / S288c) (Baker's yeast).